A 570-amino-acid chain; its full sequence is Periplasmic trehalase (570 aa).

The N-terminal stretch at 1–34 (MIPPEIRRSVLLQKAIKLALAGTLLTFASFSATA) is a signal peptide. Residues Arg-159, 166–167 (WD), Asn-203, 212–214 (RSQ), 284–286 (RPE), and Gly-317 contribute to the substrate site. Active-site proton donor/acceptor residues include Asp-319 and Glu-503. Glu-518 is a substrate binding site. The segment at 544 to 570 (KPCDSVPSTRPASLSATPTKTPSAATQ) is disordered. Residues 554-570 (PASLSATPTKTPSAATQ) show a composition bias toward low complexity.

Belongs to the glycosyl hydrolase 37 family. In terms of assembly, monomer.

The protein resides in the periplasm. The catalysed reaction is alpha,alpha-trehalose + H2O = alpha-D-glucose + beta-D-glucose. Its function is as follows. Provides the cells with the ability to utilize trehalose at high osmolarity by splitting it into glucose molecules that can subsequently be taken up by the phosphotransferase-mediated uptake system. The protein is Periplasmic trehalase of Salmonella paratyphi B (strain ATCC BAA-1250 / SPB7).